Reading from the N-terminus, the 715-residue chain is Fatty acid oxidation complex subunit alpha (715 aa).

Residues 1 to 190 (MIYEGKAITV…KVGAVDAVVA (190 aa)) form an enoyl-CoA hydratase/isomerase region. Position 297 (Asp297) interacts with substrate. A 3-hydroxyacyl-CoA dehydrogenase region spans residues 312 to 715 (HDVKQAAVLG…MAKNGQRFFN (404 aa)). NAD(+) is bound by residues Met325, Asp344, 401–403 (VVE), Lys408, and Ser430. His451 serves as the catalytic For 3-hydroxyacyl-CoA dehydrogenase activity. NAD(+) is bound at residue Asn454. Substrate is bound by residues Asn501 and Tyr660.

The protein in the N-terminal section; belongs to the enoyl-CoA hydratase/isomerase family. In the C-terminal section; belongs to the 3-hydroxyacyl-CoA dehydrogenase family. In terms of assembly, heterotetramer of two alpha chains (FadB) and two beta chains (FadA).

The catalysed reaction is a (3S)-3-hydroxyacyl-CoA + NAD(+) = a 3-oxoacyl-CoA + NADH + H(+). The enzyme catalyses a (3S)-3-hydroxyacyl-CoA = a (2E)-enoyl-CoA + H2O. It catalyses the reaction a 4-saturated-(3S)-3-hydroxyacyl-CoA = a (3E)-enoyl-CoA + H2O. It carries out the reaction (3S)-3-hydroxybutanoyl-CoA = (3R)-3-hydroxybutanoyl-CoA. The catalysed reaction is a (3Z)-enoyl-CoA = a 4-saturated (2E)-enoyl-CoA. The enzyme catalyses a (3E)-enoyl-CoA = a 4-saturated (2E)-enoyl-CoA. It participates in lipid metabolism; fatty acid beta-oxidation. Its function is as follows. Involved in the aerobic and anaerobic degradation of long-chain fatty acids via beta-oxidation cycle. Catalyzes the formation of 3-oxoacyl-CoA from enoyl-CoA via L-3-hydroxyacyl-CoA. It can also use D-3-hydroxyacyl-CoA and cis-3-enoyl-CoA as substrate. In Pseudomonas putida (Arthrobacter siderocapsulatus), this protein is Fatty acid oxidation complex subunit alpha.